A 777-amino-acid chain; its full sequence is MGRGSGTFERLLDKATSQLLLETDWESILQICDLIRQGDTQAKYAVSSIKKKVNDKNPHVALYALEVMESVVKNCGQTVHDEVANKQTMEELKDLLKRQVEVNVRNKILYLIQAWAHAFRNEPKYKVVQDTYQIMKVEGHVFPEFKESDAMFAAERAPDWVDAEECHRCRVQFGVMTRKHHCRACGQIFCGKCSSKYSTIPKFGIEKEVRVCEPCFEQLNKKAEGKAASTTELPPEYLTSPLSQQSQLPPKRDETALQEEEELQLALALSQSEAEEKERMRQKSAYTAYPKAEPTPVASSAPPASSLYSSPVNSSAPLAEDIDPELARYLNRNYWEKKQEEARKSPTPSAPVPLTEPTAQPGEGHAIPANVETSLPETDPQAVTAAGAAFSEQYQNGESEESHAQFLKALQNAVTTFVNRMKSNHVRGRSITNDSAVLSLFQSINTMHPQLLELLNQLDERRLYYEGLQDKLAQIRDARGALSALREEHREKLRRAAEEAERQRQIQLAQKLEIMRQKKQEYLEVQRQLAIQRLQEQEKERQMRLEQQKQTIQMRAQMPAFSLPYAQLQAMPAAGGVLYQPSGPASFAGTFSPAGSVEGSPMHTMYMSQPAPAASGPYPSMPAAAADPSMVSAYMYPAGAAGAQAAAQGPAGPTTSPAYSSYQPTPTQGYQTVASQAPQSLPAISQPPQSGTMGYMGSQSVSMGYQPYSMQNLMPTLPGQDAPLPPPQQPYISGQQPVYQQMAPSSGPPQQQPPVAQQPPAQGPPAQGSEAQLISFD.

The VHS domain maps to 15–143 (ATSQLLLETD…IMKVEGHVFP (129 aa)). An FYVE-type zinc finger spans residues 160-220 (WVDAEECHRC…VCEPCFEQLN (61 aa)). The Zn(2+) site is built by cysteine 166, cysteine 169, cysteine 182, cysteine 185, cysteine 190, and cysteine 193. Lysine 207 carries the post-translational modification N6-acetyllysine. Residues cysteine 212 and cysteine 215 each coordinate Zn(2+). Positions 223-319 (AEGKAASTTE…SPVNSSAPLA (97 aa)) are disordered. The segment at 225-541 (GKAASTTELP…QRLQEQEKER (317 aa)) is interaction with SNX1. Residues 258 to 277 (QEEEELQLALALSQSEAEEK) enclose the UIM domain. Low complexity predominate over residues 292 to 311 (AEPTPVASSAPPASSLYSSP). Residues tyrosine 308, tyrosine 329, and tyrosine 334 each carry the phosphotyrosine modification. A disordered region spans residues 338–370 (KQEEARKSPTPSAPVPLTEPTAQPGEGHAIPAN). The interval 443 to 541 (SINTMHPQLL…QRLQEQEKER (99 aa)) is interaction with SNAP25 and TRAK2. An interaction with STAM region spans residues 452-570 (LELLNQLDER…FSLPYAQLQA (119 aa)). An interaction with NF2 region spans residues 478 to 777 (ARGALSALRE…GSEAQLISFD (300 aa)). The residue at position 549 (lysine 549) is an N6-succinyllysine. The span at 645–658 (AAAQGPAGPTTSPA) shows a compositional bias: low complexity. 2 disordered regions span residues 645–698 (AAAQ…YMGS) and 712–777 (NLMP…ISFD). Composition is skewed to polar residues over residues 659–698 (YSSY…YMGS) and 730–739 (PYISGQQPVY). Residues 753–777 (PPVAQQPPAQGPPAQGSEAQLISFD) show a composition bias toward low complexity.

As to quaternary structure, component of the ESCRT-0 complex composed of STAM or STAM2 and HGS. Part of a complex at least composed of HSG, STAM2 (or probably STAM) and EPS15. Interacts with STAM. Interacts with STAM2. Interacts with EPS15; the interaction is direct, calcium-dependent and inhibited by SNAP25. Identified in a complex with STAM and LITAF. Found in a complex with STAM and E3 ligase ITCH and DTX3L. Interacts with E3 ligase DTX3L; the interaction brings together STAM and HSG, promotes their recruitment to early endosomes and decreases STAM and HGS ubiquitination by ITCH. Interacts with NF2; the interaction is direct. Interacts with ubiquitin; the interaction is direct. Interacts with VPS37C. Interacts with SMAD1, SMAD2 and SMAD3. Interacts with TSG101; the interaction mediates the association with the ESCRT-I complex. Interacts with SNAP25; the interaction is direct and decreases with addition of increasing concentrations of free calcium. Interacts with SNX1; the interaction is direct. Component of a 550 kDa membrane complex at least composed of HGS and SNX1 but excluding EGFR. Interacts with TRAK1. Interacts with TRAK2. Component of the CART complex, at least composed of ACTN4, HGS/HRS, MYO5B and TRIM3. Interacts (via UIM domain) with UBQLN1 (via ubiquitin-like domain). Interacts with ARRDC3. Identified in a complex containing at least ARRDC4, AVPR2 and HGS. Interacts with LAPTM4B; promotes HGS ubiquitination. In terms of processing, phosphorylated on Tyr-334. A minor site of phosphorylation on Tyr-329 is detected. Phosphorylation occurs in response to EGF, IL-2, GM-CSF and HGF. Post-translationally, ubiquitinated by ITCH.

The protein resides in the cytoplasm. It localises to the early endosome membrane. The protein localises to the endosome. Its subcellular location is the multivesicular body membrane. Functionally, involved in intracellular signal transduction mediated by cytokines and growth factors. When associated with STAM it suppresses DNA signaling upon stimulation by IL-2 and GM-CSF. Could be a direct effector of PI3-kinase in vesicular pathway via early endosomes and may regulate trafficking to early and late endosomes by recruiting clathrin. May concentrate ubiquitinated receptors within clathrin-coated regions. Involved in down-regulation of receptor tyrosine kinase via multivesicular body (MVBs) when complexed with STAM (ESCRT-0 complex). The ESCRT-0 complex binds ubiquitin and acts as a sorting machinery that recognizes ubiquitinated receptors and transfers them to further sequential lysosomal sorting/trafficking processes. May contribute to the efficient recruitment of SMADs to the activin receptor complex. Involved in receptor recycling via its association with the CART complex, a multiprotein complex required for efficient transferrin receptor recycling but not for EGFR degradation. The sequence is that of Hepatocyte growth factor-regulated tyrosine kinase substrate (HGS) from Bos taurus (Bovine).